The primary structure comprises 124 residues: Large ribosomal subunit protein bL20 (124 aa).

Belongs to the bacterial ribosomal protein bL20 family.

Its function is as follows. Binds directly to 23S ribosomal RNA and is necessary for the in vitro assembly process of the 50S ribosomal subunit. It is not involved in the protein synthesizing functions of that subunit. This Mycoplasma genitalium (strain ATCC 33530 / DSM 19775 / NCTC 10195 / G37) (Mycoplasmoides genitalium) protein is Large ribosomal subunit protein bL20 (rplT).